The following is a 715-amino-acid chain: Polyribonucleotide nucleotidyltransferase (715 aa).

Asp-491 and Asp-497 together coordinate Mg(2+). The KH domain occupies 558-617; sequence PKIMTMTINPEKIRDVIGPQGRVINKIIEETGVKIDIEQDGRVFIASINHEANLRAKQII. Residues 627-695 enclose the S1 motif domain; that stretch reads GQVYLGTVKR…DQGRVNLSRK (69 aa).

This sequence belongs to the polyribonucleotide nucleotidyltransferase family. It depends on Mg(2+) as a cofactor.

The protein localises to the cytoplasm. The catalysed reaction is RNA(n+1) + phosphate = RNA(n) + a ribonucleoside 5'-diphosphate. Involved in mRNA degradation. Catalyzes the phosphorolysis of single-stranded polyribonucleotides processively in the 3'- to 5'-direction. The sequence is that of Polyribonucleotide nucleotidyltransferase from Brevibacillus brevis (strain 47 / JCM 6285 / NBRC 100599).